The chain runs to 462 residues: BBSome complex member bbs-4 (462 aa).

The interval 1–46 (MEASNQDEIIGTDVIPNEQDNPEEVVPEPTSLDVPPPPPERAPSAP) is disordered. TPR repeat units lie at residues 89–122 (EAAF…SGKN), 124–156 (RYFY…MKDN), 199–232 (ATLI…QPDN), 234–266 (EVMN…DPAN), 268–300 (QAIL…SDYN), 335–368 (YKIS…YPQN), and 369–402 (AKAV…KKNP).

It belongs to the BBS4 family. In terms of assembly, part of BBSome complex, that contains at least bbs-1, bbs-2, bbs-4, bbs-5, osm-12, bbs-8/ttc-8 and bbs-9. Interacts (via C-terminus) with bbs-5; the interaction is direct.

The protein resides in the cytoplasm. The protein localises to the cytoskeleton. It is found in the microtubule organizing center. Its subcellular location is the centrosome. It localises to the cell projection. The protein resides in the cilium membrane. Functionally, component of the BBSome complex. The BBSome complex is thought to function as a coat complex required for sorting of specific membrane proteins to the primary cilia. The BBSome complex is required for ciliogenesis but is dispensable for centriolar satellite function. Required for proper BBSome complex assembly and its ciliary localization. May be required for microtubule anchoring at the centrosome but not for microtubule nucleation. May be required for the dynein-mediated transport of pericentriolar proteins to the centrosome. Required, redundantly with bbs-5, for cilia biogenesis and both the assembly and movement of intraflagellar transport proteins along the ciliary axoneme. Plays a role in the removal of degraded mechanosensory receptors within the cilia. The chain is BBSome complex member bbs-4 from Caenorhabditis elegans.